The sequence spans 336 residues: Anthranilate phosphoribosyltransferase (336 aa).

5-phospho-alpha-D-ribose 1-diphosphate is bound by residues Gly-79, 82–83 (GD), Thr-87, 89–92 (NISS), 107–115 (KHGNRSVSS), and Ser-119. Gly-79 serves as a coordination point for anthranilate. Residue Ser-91 participates in Mg(2+) binding. Asn-110 serves as a coordination point for anthranilate. Arg-165 provides a ligand contact to anthranilate. Positions 223 and 224 each coordinate Mg(2+).

This sequence belongs to the anthranilate phosphoribosyltransferase family. In terms of assembly, homodimer. Requires Mg(2+) as cofactor.

The enzyme catalyses N-(5-phospho-beta-D-ribosyl)anthranilate + diphosphate = 5-phospho-alpha-D-ribose 1-diphosphate + anthranilate. It functions in the pathway amino-acid biosynthesis; L-tryptophan biosynthesis; L-tryptophan from chorismate: step 2/5. Its function is as follows. Catalyzes the transfer of the phosphoribosyl group of 5-phosphorylribose-1-pyrophosphate (PRPP) to anthranilate to yield N-(5'-phosphoribosyl)-anthranilate (PRA). The sequence is that of Anthranilate phosphoribosyltransferase from Tolumonas auensis (strain DSM 9187 / NBRC 110442 / TA 4).